A 279-amino-acid polypeptide reads, in one-letter code: NADPH-dependent 7-cyano-7-deazaguanine reductase (279 aa).

Ile86–Ser88 serves as a coordination point for substrate. Ser88 to Lys89 provides a ligand contact to NADPH. Residue Cys187 is the Thioimide intermediate of the active site. Asp194 (proton donor) is an active-site residue. A substrate-binding site is contributed by His226 to Glu227. Arg255 to Gly256 is a binding site for NADPH.

Belongs to the GTP cyclohydrolase I family. QueF type 2 subfamily. In terms of assembly, homodimer.

The protein localises to the cytoplasm. The catalysed reaction is 7-aminomethyl-7-carbaguanine + 2 NADP(+) = 7-cyano-7-deazaguanine + 2 NADPH + 3 H(+). The protein operates within tRNA modification; tRNA-queuosine biosynthesis. Its function is as follows. Catalyzes the NADPH-dependent reduction of 7-cyano-7-deazaguanine (preQ0) to 7-aminomethyl-7-deazaguanine (preQ1). The polypeptide is NADPH-dependent 7-cyano-7-deazaguanine reductase (Actinobacillus pleuropneumoniae serotype 3 (strain JL03)).